A 240-amino-acid polypeptide reads, in one-letter code: 1-(5-phosphoribosyl)-5-[(5-phosphoribosylamino)methylideneamino] imidazole-4-carboxamide isomerase (240 aa).

Catalysis depends on Asp-8, which acts as the Proton acceptor. Asp-129 functions as the Proton donor in the catalytic mechanism.

The protein belongs to the HisA/HisF family.

It localises to the cytoplasm. It carries out the reaction 1-(5-phospho-beta-D-ribosyl)-5-[(5-phospho-beta-D-ribosylamino)methylideneamino]imidazole-4-carboxamide = 5-[(5-phospho-1-deoxy-D-ribulos-1-ylimino)methylamino]-1-(5-phospho-beta-D-ribosyl)imidazole-4-carboxamide. The protein operates within amino-acid biosynthesis; L-histidine biosynthesis; L-histidine from 5-phospho-alpha-D-ribose 1-diphosphate: step 4/9. This chain is 1-(5-phosphoribosyl)-5-[(5-phosphoribosylamino)methylideneamino] imidazole-4-carboxamide isomerase, found in Listeria monocytogenes serotype 4b (strain CLIP80459).